The sequence spans 102 residues: MKRMIRSHGRKTECQMTGAGERRGSAVGALICGSGTRRGSGANERRDSDVGPIAHSSGTRRGSANETSACTRTDHQKADIGLWFMFLVFGLCSWLAMRYRAQ.

Disordered regions lie at residues 1-21 and 33-71; these read MKRM…GAGE and GSGT…SACT. Residues 1–79 are Extracellular-facing; the sequence is MKRMIRSHGR…CTRTDHQKAD (79 aa). Positions 56 to 71 are enriched in polar residues; sequence SSGTRRGSANETSACT. Asparagine 65 is a glycosylation site (N-linked (GlcNAc...) asparagine; by host). The chain crosses the membrane as a helical span at residues 80 to 97; the sequence is IGLWFMFLVFGLCSWLAM. The Cytoplasmic portion of the chain corresponds to 98 to 102; it reads RYRAQ.

This sequence belongs to the HHV-5 UL15A protein family.

The protein localises to the host membrane. This is an uncharacterized protein from Human cytomegalovirus (strain Merlin) (HHV-5).